A 131-amino-acid polypeptide reads, in one-letter code: D-ribose pyranase (131 aa).

Residue H20 is the Proton donor of the active site. Residues D28, H98, and Y120–N122 contribute to the substrate site.

The protein belongs to the RbsD / FucU family. RbsD subfamily. As to quaternary structure, homodecamer.

It localises to the cytoplasm. The catalysed reaction is beta-D-ribopyranose = beta-D-ribofuranose. It participates in carbohydrate metabolism; D-ribose degradation; D-ribose 5-phosphate from beta-D-ribopyranose: step 1/2. In terms of biological role, catalyzes the interconversion of beta-pyran and beta-furan forms of D-ribose. This is D-ribose pyranase from Bacillus velezensis (strain DSM 23117 / BGSC 10A6 / LMG 26770 / FZB42) (Bacillus amyloliquefaciens subsp. plantarum).